Reading from the N-terminus, the 209-residue chain is GTP cyclohydrolase 1 (209 aa).

Positions 100, 103, and 171 each coordinate Zn(2+).

It belongs to the GTP cyclohydrolase I family. In terms of assembly, toroid-shaped homodecamer, composed of two pentamers of five dimers.

It carries out the reaction GTP + H2O = 7,8-dihydroneopterin 3'-triphosphate + formate + H(+). The protein operates within cofactor biosynthesis; 7,8-dihydroneopterin triphosphate biosynthesis; 7,8-dihydroneopterin triphosphate from GTP: step 1/1. This is GTP cyclohydrolase 1 from Ralstonia nicotianae (strain ATCC BAA-1114 / GMI1000) (Ralstonia solanacearum).